A 352-amino-acid chain; its full sequence is Protein RecA (352 aa).

ATP is bound at residue 65–72 (GPESSGKT). The segment at 333–352 (VKAAANREPVEEVEEADTDI) is disordered. A compositionally biased stretch (acidic residues) spans 343–352 (EEVEEADTDI).

Belongs to the RecA family.

The protein resides in the cytoplasm. In terms of biological role, can catalyze the hydrolysis of ATP in the presence of single-stranded DNA, the ATP-dependent uptake of single-stranded DNA by duplex DNA, and the ATP-dependent hybridization of homologous single-stranded DNAs. It interacts with LexA causing its activation and leading to its autocatalytic cleavage. This chain is Protein RecA, found in Pseudomonas fluorescens.